Reading from the N-terminus, the 105-residue chain is Large ribosomal subunit protein uL24 (105 aa).

It belongs to the universal ribosomal protein uL24 family. As to quaternary structure, part of the 50S ribosomal subunit.

One of two assembly initiator proteins, it binds directly to the 5'-end of the 23S rRNA, where it nucleates assembly of the 50S subunit. Functionally, one of the proteins that surrounds the polypeptide exit tunnel on the outside of the subunit. The protein is Large ribosomal subunit protein uL24 of Sorangium cellulosum (strain So ce56) (Polyangium cellulosum (strain So ce56)).